The sequence spans 453 residues: Protein FAM117A (453 aa).

The segment covering 1-25 has biased composition (gly residues); sequence MAGAAAGGRGGGAWGPGRGGAGGLR. Residues 1–45 are disordered; it reads MAGAAAGGRGGGAWGPGRGGAGGLRRGCSPPAPAGSPRAGLQPLR. A phosphoserine mark is found at Ser-29 and Ser-67. Residues 149-175 adopt a coiled-coil conformation; the sequence is TDHRKEISKLKQQLQRTKLSRSGKEKE. A disordered region spans residues 159–201; that stretch reads KQQLQRTKLSRSGKEKERGSPLLGDHAVRGALRASPPSFPSGS. Phosphoserine occurs at positions 178, 193, 201, and 213. Positions 269-278 are enriched in low complexity; that stretch reads SSPSMSLASP. A disordered region spans residues 269 to 320; the sequence is SSPSMSLASPQPCGLASHEEHRGAAEELASTPNDKASSPGHPAFLEDGSPSP. A Phosphothreonine modification is found at Thr-299. A phosphoserine mark is found at Ser-319 and Ser-327. Thr-354 is subject to Phosphothreonine. Positions 406-416 are enriched in pro residues; that stretch reads GSPLPPASPRP. The interval 406 to 453 is disordered; that stretch reads GSPLPPASPRPPPRKDPEASKASPLPFEPWQRTPPSEEPVLFQSSLMV. Phosphoserine is present on residues Ser-413 and Ser-428.

The protein belongs to the FAM117 family.

The sequence is that of Protein FAM117A (FAM117A) from Homo sapiens (Human).